A 122-amino-acid chain; its full sequence is Large ribosomal subunit protein uL14 (122 aa).

The protein belongs to the universal ribosomal protein uL14 family. As to quaternary structure, part of the 50S ribosomal subunit. Forms a cluster with proteins L3 and L19. In the 70S ribosome, L14 and L19 interact and together make contacts with the 16S rRNA in bridges B5 and B8.

In terms of biological role, binds to 23S rRNA. Forms part of two intersubunit bridges in the 70S ribosome. The chain is Large ribosomal subunit protein uL14 from Shewanella loihica (strain ATCC BAA-1088 / PV-4).